Reading from the N-terminus, the 510-residue chain is MIWHVQNENFILDSTRIFMKAFHLLLFHGSFIFPECILIFGLILLLMIDSTSDQKDIPWLYFISSTSLVMSITALLFRWREEPMISFSGNFQTNNFNEIFQFLILLCSTLCIPLSVEYIECTEMAITEFLLFVLTATLGGMFLCGANDSITIFVAPECFSLCSYLLSGYTKRDVRSNEATTKYLLMGGASSSILVHGFSWLYGSSGGEIELQEIVNGLINTQMYNSPGISIALIFITVGIGFKLSPAPFHQWTPDVYEGSPTPVVAFLSVTSKVAASAPATRIFDIPFYFSSNEWHLLLEILAILSMILGNLIAITQTSMKRMLAYSSIGQIGYVIIGIIVGDSNDGYASMITYMLFYISMNLGTFARIVLFGLRTGTDNIRDYAGLYTKDPFLALSSALCLLSLGGLPPLAGFFGKLHLFWCGWQAGLYFLVSIGLLTSVVSIYYYLKIIKLLMTGRKQEITPHVRNYRRSPLRSNNSIELSMIVCVIASTIPGISMNPIIAIAQDTLF.

13 consecutive transmembrane segments (helical) span residues 24–44 (LLLF…GLIL), 57–77 (IPWL…ALLF), 99–119 (IFQF…VEYI), 124–144 (MAIT…MFLC), 150–170 (ITIF…SGYT), 183–203 (YLLM…WLYG), 229–249 (ISIA…PAPF), 295–315 (WHLL…LIAI), 323–343 (MLAY…IVGD), 354–374 (YMLF…LFGL), 395–415 (ALSS…AGFF), 418–438 (LHLF…IGLL), and 484–504 (MIVC…IIAI).

This sequence belongs to the complex I subunit 2 family. In terms of assembly, NDH is composed of at least 16 different subunits, 5 of which are encoded in the nucleus.

It localises to the plastid. The protein resides in the chloroplast thylakoid membrane. The catalysed reaction is a plastoquinone + NADH + (n+1) H(+)(in) = a plastoquinol + NAD(+) + n H(+)(out). It catalyses the reaction a plastoquinone + NADPH + (n+1) H(+)(in) = a plastoquinol + NADP(+) + n H(+)(out). In terms of biological role, NDH shuttles electrons from NAD(P)H:plastoquinone, via FMN and iron-sulfur (Fe-S) centers, to quinones in the photosynthetic chain and possibly in a chloroplast respiratory chain. The immediate electron acceptor for the enzyme in this species is believed to be plastoquinone. Couples the redox reaction to proton translocation, and thus conserves the redox energy in a proton gradient. The chain is NAD(P)H-quinone oxidoreductase subunit 2 B, chloroplastic from Drimys granadensis.